The sequence spans 45 residues: Iota-conotoxin-like R11.12 (45 aa).

4 disulfides stabilise this stretch: C5/C19, C12/C22, C18/C27, and C21/C36. At L43 the chain carries D-leucine. A propeptide (removed by a carboxypeptidase) is located at residue R45.

It belongs to the conotoxin I1 superfamily. As to expression, expressed by the venom duct.

The protein localises to the secreted. Functionally, iota-conotoxins bind to voltage-gated sodium channels (Nav) and act as agonists by shifting the voltage-dependence of activation to more hyperpolarized levels. Produces general excitatory symptoms. The protein is Iota-conotoxin-like R11.12 of Conus radiatus (Rayed cone).